The primary structure comprises 116 residues: Large ribosomal subunit protein bL19 (116 aa).

Belongs to the bacterial ribosomal protein bL19 family.

This protein is located at the 30S-50S ribosomal subunit interface and may play a role in the structure and function of the aminoacyl-tRNA binding site. This chain is Large ribosomal subunit protein bL19, found in Haemophilus ducreyi (strain 35000HP / ATCC 700724).